Consider the following 445-residue polypeptide: MTEYLSVSALTKYIKYKFDQDPHLQSVLIKGELSNFKKHSSGHLYFNVKDKESVISAMMFKGNASKLGFEPKEGDEVLIEARVSVYERRGNYQIYVNKMQLDGIGNLYQKLELLKKKLKKEGYFNQSNKKLIPKYPKKIAVLTASTGAAIRDIHSTINNRYPLVEQIQISTLVQGTQARQDIIEKIQYADSLDVDTIIVGRGGGSIEDLWNFNEEDVVKTIFNCQTPIISAVGHETDFTLSDFVADVRAATPTQAAVIATPDQYELLQQIKQYEYTLSRYIKQYIEHQKKQLNHISSYYKFKQPSLLYDQQIQKRDELERQLNHLLNTKVEKSKHHLKLLQQSFNFKNLNQQITQEKQSIYQLHSRLSKIMSNNITNLKTVLKNKLESLNNLSPTNTMLRGYAIVNKDNEVVTSTHKLNENDQISLTMKDGSVDATVKKVRCNDE.

The protein belongs to the XseA family. In terms of assembly, heterooligomer composed of large and small subunits.

It localises to the cytoplasm. It catalyses the reaction Exonucleolytic cleavage in either 5'- to 3'- or 3'- to 5'-direction to yield nucleoside 5'-phosphates.. Bidirectionally degrades single-stranded DNA into large acid-insoluble oligonucleotides, which are then degraded further into small acid-soluble oligonucleotides. The sequence is that of Exodeoxyribonuclease 7 large subunit from Staphylococcus epidermidis (strain ATCC 12228 / FDA PCI 1200).